Consider the following 467-residue polypeptide: Chlorophenol O-methyltransferase (467 aa).

The interval 1-41 (MAELRAPSSLSTERNGSASNTDVDKQKLNHLYQNGNKKTGS) is disordered. 2 stretches are compositionally biased toward polar residues: residues 8 to 21 (SSLSTERNGSASNT) and 31 to 41 (LYQNGNKKTGS). Residue aspartate 320 participates in S-adenosyl-L-methionine binding. Histidine 368 acts as the Proton acceptor in catalysis.

It belongs to the class I-like SAM-binding methyltransferase superfamily. Cation-independent O-methyltransferase family.

The enzyme catalyses 2,4,6-trichlorophenol + S-adenosyl-L-methionine = 2,4,6-trichloroanisole + S-adenosyl-L-homocysteine. S-adenosyl-L-homocysteine acts as a competitive inhibitor. Also strongly inhibited by low concentrations of several metal ions, such as Cu(2+), Hg(2+), Zn(2+), and Ag(+), and to a lesser extent by p-chloromercuribenzoic acid, but it is not significantly affected by several thiols or other thiol reagents. Chlorophenol O-methyltransferase that methylates chlorophenols into chloroanisoles which are thought to be responsible for cork taint of wines. The only single chlorophenol (CP) methylated is 2-CP; neither 3-CP nor 4-CP are effective substrates. Within the dichlorophenols (DCPs), 2,4-DCP supports the highest rate of O-methylation, and the activity decreases in the following order: 2,3-DCP, 2,5-DCP, 2,6-DCP, and 3,4-DCP. Within the trichlorophenol (TCP) group, the maximal activity is observed with 2,3,4-TCP, whereas there is increasingly reduced activity with 2,4,5-TCP, 2,4,6-TCP, and 2,3,6-TCP. The only tetrachlorophenol (TeCP) that is methylated is 2,3,4,5-TeCP, since no activity can be detected with 2,3,4,6-TeCP and 2,3,5,6-TeCP. Is also able to methylate other halogenated phenols containing fluoro or bromo substituents, whereas other hydroxylated compounds, such as hydroxylated benzoic acids, hydroxybenzaldehydes, phenol, 2-metoxyphenol, and dihydroxybenzene, were not methylated. The chain is Chlorophenol O-methyltransferase from Trichoderma longibrachiatum.